Reading from the N-terminus, the 97-residue chain is Large ribosomal subunit protein uL23 (97 aa).

This sequence belongs to the universal ribosomal protein uL23 family. Part of the 50S ribosomal subunit. Contacts protein L29, and trigger factor when it is bound to the ribosome.

One of the early assembly proteins it binds 23S rRNA. One of the proteins that surrounds the polypeptide exit tunnel on the outside of the ribosome. Forms the main docking site for trigger factor binding to the ribosome. This Marinobacter nauticus (strain ATCC 700491 / DSM 11845 / VT8) (Marinobacter aquaeolei) protein is Large ribosomal subunit protein uL23.